The chain runs to 521 residues: Amidase 1 (521 aa).

Catalysis depends on charge relay system residues K112 and S187. Substrate-binding positions include S187 and 208–211 (IGGS). S211 acts as the Acyl-ester intermediate in catalysis.

This sequence belongs to the amidase family.

The catalysed reaction is a monocarboxylic acid amide + H2O = a monocarboxylate + NH4(+). Its pathway is xenobiotic degradation. Its function is as follows. Amidase; part of the Fusarium detoxification of benzoxazolinone cluster 1 (FDB1) involved in the degradation of benzoxazolinones produced by the host plant. Maize, wheat, and rye produce the 2 benzoxazinone phytoanticipins 2,4-dihy-droxy-7-methoxy-1,4-benzoxazin-3-one (DIMBOA) and 2,4-dihydroxy-1,4-benzoxazin-3-one (DIBOA) that, due to their inherent instability once released, spontaneously degrade to the more stable corresponding benzoxazolinones, 6-methoxy-2-benzoxazolinone (MBOA) and 2-benzoxazolinone (BOA), respectively. The first step in the detoxification of benzoxazolinones involves the hydrolysis of the cyclic ester bond of benzoxazolinones by the FDB1 cluster gamma-lactamase MBL1 to aminophenols. MBL1 is able to convert BOA into 2-aminophenol (2-AP), as well as MBOA into 5-methoxy-2-aminophenol (2-AMP). The FDB2 cluster N-malonyltransferase FDB2/NAT1 then metabolizes aminophenols via N-malonylation to non-toxic malonamic acids. FDB2/NAT1 converts 2-AP into N-(2-hydroxyphenyl) malonamic acid (HPMA) and 2-AMP into N-(2-hydroxy-4-methoxyphenyl) malonamic acid (HMPMA). The duplicated dienlactone hydrolases DLH1 and DLH2 may provide redundant function for hydrolyzing the lactone moiety in the BOA molecule. The roles of the amidases an other enzymes encoded by the 2 FDB clusters have not been identified so far. This is Amidase 1 from Gibberella moniliformis (strain M3125 / FGSC 7600) (Maize ear and stalk rot fungus).